A 305-amino-acid chain; its full sequence is Ribonuclease BN (305 aa).

Residues His-64, His-66, Asp-68, His-69, His-141, Asp-212, and His-270 each contribute to the Zn(2+) site. Asp-68 (proton acceptor) is an active-site residue.

The protein belongs to the RNase Z family. RNase BN subfamily. Homodimer. Zn(2+) serves as cofactor.

In terms of biological role, zinc phosphodiesterase, which has both exoribonuclease and endoribonuclease activities. This chain is Ribonuclease BN, found in Shigella flexneri.